A 123-amino-acid chain; its full sequence is Small ribosomal subunit protein uS12 (123 aa).

Residues 1–47 are disordered; the sequence is MPTINQLVRKGRKKAEKKQSTPALKGGPQKRGVCTRVYTSTPKKPNS. D89 carries the post-translational modification 3-methylthioaspartic acid.

It belongs to the universal ribosomal protein uS12 family. As to quaternary structure, part of the 30S ribosomal subunit. Contacts proteins S8 and S17. May interact with IF1 in the 30S initiation complex.

Functionally, with S4 and S5 plays an important role in translational accuracy. In terms of biological role, interacts with and stabilizes bases of the 16S rRNA that are involved in tRNA selection in the A site and with the mRNA backbone. Located at the interface of the 30S and 50S subunits, it traverses the body of the 30S subunit contacting proteins on the other side and probably holding the rRNA structure together. The combined cluster of proteins S8, S12 and S17 appears to hold together the shoulder and platform of the 30S subunit. This chain is Small ribosomal subunit protein uS12, found in Desulforapulum autotrophicum (strain ATCC 43914 / DSM 3382 / VKM B-1955 / HRM2) (Desulfobacterium autotrophicum).